A 406-amino-acid chain; its full sequence is Dual-specificity RNA methyltransferase RlmN (406 aa).

Glutamate 119 serves as the catalytic Proton acceptor. The Radical SAM core domain occupies aspartate 125 to aspartate 370. Cysteine 132 and cysteine 375 form a disulfide bridge. The [4Fe-4S] cluster site is built by cysteine 139, cysteine 143, and cysteine 146. S-adenosyl-L-methionine is bound by residues glycine 192–glutamate 193, serine 224, serine 246–histidine 248, and asparagine 332. The active-site S-methylcysteine intermediate is the cysteine 375.

The protein belongs to the radical SAM superfamily. RlmN family. It depends on [4Fe-4S] cluster as a cofactor.

The protein localises to the cytoplasm. The catalysed reaction is adenosine(2503) in 23S rRNA + 2 reduced [2Fe-2S]-[ferredoxin] + 2 S-adenosyl-L-methionine = 2-methyladenosine(2503) in 23S rRNA + 5'-deoxyadenosine + L-methionine + 2 oxidized [2Fe-2S]-[ferredoxin] + S-adenosyl-L-homocysteine. It catalyses the reaction adenosine(37) in tRNA + 2 reduced [2Fe-2S]-[ferredoxin] + 2 S-adenosyl-L-methionine = 2-methyladenosine(37) in tRNA + 5'-deoxyadenosine + L-methionine + 2 oxidized [2Fe-2S]-[ferredoxin] + S-adenosyl-L-homocysteine. Functionally, specifically methylates position 2 of adenine 2503 in 23S rRNA and position 2 of adenine 37 in tRNAs. m2A2503 modification seems to play a crucial role in the proofreading step occurring at the peptidyl transferase center and thus would serve to optimize ribosomal fidelity. This Xylella fastidiosa (strain M12) protein is Dual-specificity RNA methyltransferase RlmN.